A 287-amino-acid chain; its full sequence is 4,4'-diapophytoene synthase (287 aa).

Residues 18–21 (HSKS), tyrosine 41, and arginine 45 contribute to the (2E,6E)-farnesyl diphosphate site. The Mg(2+) site is built by aspartate 48 and aspartate 52. Residue glutamine 165 participates in (2E,6E)-farnesyl diphosphate binding. Asparagine 168 lines the Mg(2+) pocket. Arginine 171 lines the (2E,6E)-farnesyl diphosphate pocket. Aspartate 172 contacts Mg(2+). Tyrosine 248 lines the (2E,6E)-farnesyl diphosphate pocket.

This sequence belongs to the phytoene/squalene synthase family. CrtM subfamily. Requires Mg(2+) as cofactor.

The enzyme catalyses 2 (2E,6E)-farnesyl diphosphate = 15-cis-4,4'-diapophytoene + 2 diphosphate. It participates in carotenoid biosynthesis; staphyloxanthin biosynthesis; staphyloxanthin from farnesyl diphosphate: step 1/5. Its function is as follows. Involved in the biosynthesis of the yellow-orange carotenoid staphyloxanthin, which plays a role in the virulence via its protective function against oxidative stress. Catalyzes the head-to-head condensation of two molecules of farnesyl diphosphate (FPP) into the colorless C(30) carotenoid 4,4'-diapophytoene (dehydrosqualene). This chain is 4,4'-diapophytoene synthase, found in Staphylococcus aureus (strain NCTC 8325 / PS 47).